Here is a 202-residue protein sequence, read N- to C-terminus: MRDVWSLPCRKSLLGVAAVVLVSGTLTGCSSGDSTVAKTPVPPSTTTGTISTIISSAPSPPFATAAPPTSNTPPDDPCAVNLASPTIARVVSELPRDPRSAQPWNPEPLAGNYNECAQLSAVIIKANTNAVNPTTRAVLFHLGRFIPQGVPDTYGFNGIDPAQTTGDTVALTYPSSIDGLATAVRFHWNGNAVELISNIAGG.

The first 28 residues, 1–28 (MRDVWSLPCRKSLLGVAAVVLVSGTLTG), serve as a signal peptide directing secretion. Cys-29 carries the N-palmitoyl cysteine lipid modification. Residue Cys-29 is the site of S-diacylglycerol cysteine attachment.

The protein resides in the cell membrane. The polypeptide is Putative lipoprotein LprE (lprE) (Mycobacterium leprae (strain TN)).